The sequence spans 185 residues: Isopentenyl-diphosphate Delta-isomerase (185 aa).

Mn(2+)-binding residues include H27 and H34. The Nudix hydrolase domain occupies 32–168; it reads PLHLAFSCHL…PWAFSPWLTL (137 aa). C69 is a catalytic residue. C69 contacts Mg(2+). H71 provides a ligand contact to Mn(2+). Position 89 (E89) interacts with Mg(2+). The Mn(2+) site is built by E118 and E120. E120 is a catalytic residue.

The protein belongs to the IPP isomerase type 1 family. Requires Mg(2+) as cofactor. It depends on Mn(2+) as a cofactor.

The protein resides in the cytoplasm. The enzyme catalyses isopentenyl diphosphate = dimethylallyl diphosphate. It functions in the pathway isoprenoid biosynthesis; dimethylallyl diphosphate biosynthesis; dimethylallyl diphosphate from isopentenyl diphosphate: step 1/1. Functionally, catalyzes the 1,3-allylic rearrangement of the homoallylic substrate isopentenyl (IPP) to its highly electrophilic allylic isomer, dimethylallyl diphosphate (DMAPP). The polypeptide is Isopentenyl-diphosphate Delta-isomerase (Leifsonia xyli subsp. xyli (strain CTCB07)).